The chain runs to 336 residues: Holliday junction branch migration complex subunit RuvB (336 aa).

The tract at residues 1 to 182 (MAKRMITTEL…FGVVHRLEFY (182 aa)) is large ATPase domain (RuvB-L). Residues Leu-21, Arg-22, Gly-63, Lys-66, Thr-67, Thr-68, 129–131 (EDY), Arg-172, Tyr-182, and Arg-219 each bind ATP. A Mg(2+)-binding site is contributed by Thr-67. Residues 183 to 253 (TTEELKEIIT…VARFALDILE (71 aa)) form a small ATPAse domain (RuvB-S) region. The interval 256–336 (KLGLDHIDRQ…GLPYENKELS (81 aa)) is head domain (RuvB-H). 2 residues coordinate DNA: Arg-311 and Arg-316.

It belongs to the RuvB family. As to quaternary structure, homohexamer. Forms an RuvA(8)-RuvB(12)-Holliday junction (HJ) complex. HJ DNA is sandwiched between 2 RuvA tetramers; dsDNA enters through RuvA and exits via RuvB. An RuvB hexamer assembles on each DNA strand where it exits the tetramer. Each RuvB hexamer is contacted by two RuvA subunits (via domain III) on 2 adjacent RuvB subunits; this complex drives branch migration. In the full resolvosome a probable DNA-RuvA(4)-RuvB(12)-RuvC(2) complex forms which resolves the HJ.

Its subcellular location is the cytoplasm. It carries out the reaction ATP + H2O = ADP + phosphate + H(+). In terms of biological role, the RuvA-RuvB-RuvC complex processes Holliday junction (HJ) DNA during genetic recombination and DNA repair, while the RuvA-RuvB complex plays an important role in the rescue of blocked DNA replication forks via replication fork reversal (RFR). RuvA specifically binds to HJ cruciform DNA, conferring on it an open structure. The RuvB hexamer acts as an ATP-dependent pump, pulling dsDNA into and through the RuvAB complex. RuvB forms 2 homohexamers on either side of HJ DNA bound by 1 or 2 RuvA tetramers; 4 subunits per hexamer contact DNA at a time. Coordinated motions by a converter formed by DNA-disengaged RuvB subunits stimulates ATP hydrolysis and nucleotide exchange. Immobilization of the converter enables RuvB to convert the ATP-contained energy into a lever motion, pulling 2 nucleotides of DNA out of the RuvA tetramer per ATP hydrolyzed, thus driving DNA branch migration. The RuvB motors rotate together with the DNA substrate, which together with the progressing nucleotide cycle form the mechanistic basis for DNA recombination by continuous HJ branch migration. Branch migration allows RuvC to scan DNA until it finds its consensus sequence, where it cleaves and resolves cruciform DNA. This is Holliday junction branch migration complex subunit RuvB from Lachnoclostridium phytofermentans (strain ATCC 700394 / DSM 18823 / ISDg) (Clostridium phytofermentans).